The primary structure comprises 312 residues: Olfactory receptor 2L8 (312 aa).

The Extracellular segment spans residues 1–24 (MENYNQTSTDFILLGLFPPSRIDL). An N-linked (GlcNAc...) asparagine glycan is attached at asparagine 5. Residues 25 to 48 (FFFILIVFIFLMALIGNLSMILLI) traverse the membrane as a helical segment. The Cytoplasmic segment spans residues 49–56 (FLDTHLHT). Residues 57–78 (PMYFLLSQLSLIDLNYISTIVP) traverse the membrane as a helical segment. Residues 79–99 (KMASDFLHGNKSISFTGCGIQ) are Extracellular-facing. Asparagine 88 carries an N-linked (GlcNAc...) asparagine glycan. Cysteine 96 and cysteine 188 are oxidised to a cystine. A helical membrane pass occupies residues 100–119 (SFFFLALGGAEALLLASMAY). Over 120–138 (DRYIAICFPLHYLIRMSKR) the chain is Cytoplasmic. The chain crosses the membrane as a helical span at residues 139 to 157 (VCVLMITGSWIIGSINACA). Topologically, residues 158 to 194 (HTVYVLHIPYCRSRAINHFFCDVPAMVTLACMDTWVY) are extracellular. The chain crosses the membrane as a helical span at residues 195–218 (EGTVFLSATIFLVFPFIGISCSYG). Over 219–235 (QVLFAVYHMKSAEGRKK) the chain is Cytoplasmic. A helical membrane pass occupies residues 236-258 (AYLTCSTHLTVVTFYYAPFVYTY). Over 259-271 (LRPRSLRSPTEDK) the chain is Extracellular. A helical membrane pass occupies residues 272–291 (VLAVFYTILTPMLNPIIYSL). Residues 292–312 (RNKEVMGALTRVSQRICSVKM) lie on the Cytoplasmic side of the membrane.

It belongs to the G-protein coupled receptor 1 family.

Its subcellular location is the cell membrane. In terms of biological role, odorant receptor. This is Olfactory receptor 2L8 (OR2L8) from Homo sapiens (Human).